Here is a 250-residue protein sequence, read N- to C-terminus: Corrinoid adenosyltransferase MMAB (250 aa).

A mitochondrion-targeting transit peptide spans 1–32 (MAVCGLGSRLGLGSRLGLRGCFGAARLLYPRF). The segment at 34 to 59 (SRGPQGVEDGDRPQPSSKTPRIPKIY) is disordered. ATP-binding positions include 60 to 63 (TKTG), 68 to 69 (SS), and K78. Phosphoserine is present on S134. 190 to 194 (RRAER) is an ATP binding site. K211 carries the N6-succinyllysine modification. N214 provides a ligand contact to ATP. K230 bears the N6-acetyllysine; alternate mark. At K230 the chain carries N6-succinyllysine; alternate.

It belongs to the Cob(I)alamin adenosyltransferase family. As to quaternary structure, homotrimer. As to expression, expressed in liver and skeletal muscle.

The protein resides in the mitochondrion. The enzyme catalyses cob(I)alamin-[corrinoid adenosyltransferase] + ATP = apo-[corrinoid adenosyltransferase] + adenosylcob(III)alamin + triphosphate. Functionally, converts cob(I)alamin to adenosylcobalamin (adenosylcob(III)alamin), a coenzyme for methylmalonyl-CoA mutase, therefore participates in the final step of the vitamin B12 conversion. Generates adenosylcobalamin (AdoCbl) and directly delivers the cofactor to MUT in a transfer that is stimulated by ATP-binding to MMAB and gated by MMAA. This chain is Corrinoid adenosyltransferase MMAB, found in Homo sapiens (Human).